The chain runs to 61 residues: Temporin-SN2 (61 aa).

Residues 1 to 22 (MFTLKKTLLLLFFLGTINLSLC) form the signal peptide. A propeptide spans 23–44 (EEERNAEEERRDGDDEMDVEVK) (removed in mature form). K61 bears the Lysine amide mark.

This sequence belongs to the frog skin active peptide (FSAP) family. Temporin subfamily. As to expression, expressed by the skin glands.

The protein localises to the secreted. In terms of biological role, antimicrobial peptide. Active against some Gram-positive and Gram-negative bacterial strains. Active against fungus C.glabrata 090902 but not against C.albicans ATCC 12231. Shows very weak hemolytic activity against human erythrocytes. The sequence is that of Temporin-SN2 from Sylvirana spinulosa (Fine-spined frog).